The chain runs to 409 residues: tRNA-specific 2-thiouridylase MnmA (409 aa).

Residues 40-47 and leucine 66 contribute to the ATP site; that span reads GLSGGVDS. Cysteine 127 acts as the Nucleophile in catalysis. Residues cysteine 127 and cysteine 237 are joined by a disulfide bond. An ATP-binding site is contributed by glycine 152. The tract at residues 156 to 179 is disordered; the sequence is RIRHREDPEPQQALPGDSSGRHQL. The interval 187–189 is interaction with tRNA; the sequence is KDQ. Cysteine 237 serves as the catalytic Cysteine persulfide intermediate. The segment at 342–343 is interaction with tRNA; it reads RY.

The protein belongs to the MnmA/TRMU family.

The protein localises to the cytoplasm. The enzyme catalyses S-sulfanyl-L-cysteinyl-[protein] + uridine(34) in tRNA + AH2 + ATP = 2-thiouridine(34) in tRNA + L-cysteinyl-[protein] + A + AMP + diphosphate + H(+). Functionally, catalyzes the 2-thiolation of uridine at the wobble position (U34) of tRNA, leading to the formation of s(2)U34. The polypeptide is tRNA-specific 2-thiouridylase MnmA (Prochlorococcus marinus (strain MIT 9303)).